Here is a 497-residue protein sequence, read N- to C-terminus: 3-octaprenyl-4-hydroxybenzoate carboxy-lyase (497 aa).

Mn(2+) is bound at residue Asn175. Residues Ile178 to Arg180, Arg192 to Leu194, and Arg197 to Gly198 each bind prenylated FMN. Glu241 lines the Mn(2+) pocket. Asp290 acts as the Proton donor in catalysis.

Belongs to the UbiD family. As to quaternary structure, homohexamer. Requires prenylated FMN as cofactor. The cofactor is Mn(2+).

It localises to the cell membrane. The catalysed reaction is a 4-hydroxy-3-(all-trans-polyprenyl)benzoate + H(+) = a 2-(all-trans-polyprenyl)phenol + CO2. It functions in the pathway cofactor biosynthesis; ubiquinone biosynthesis. Functionally, catalyzes the decarboxylation of 3-octaprenyl-4-hydroxy benzoate to 2-octaprenylphenol, an intermediate step in ubiquinone biosynthesis. This Escherichia coli O157:H7 protein is 3-octaprenyl-4-hydroxybenzoate carboxy-lyase.